A 467-amino-acid chain; its full sequence is Hydroxyacid-oxoacid transhydrogenase, mitochondrial (467 aa).

Lysine 445 carries the N6-acetyllysine modification. Serine 452 bears the Phosphoserine mark.

The protein belongs to the iron-containing alcohol dehydrogenase family. Hydroxyacid-oxoacid transhydrogenase subfamily.

Its subcellular location is the mitochondrion. It catalyses the reaction (S)-3-hydroxybutanoate + 2-oxoglutarate = (R)-2-hydroxyglutarate + acetoacetate. The enzyme catalyses 4-hydroxybutanoate + 2-oxoglutarate = (R)-2-hydroxyglutarate + succinate semialdehyde. Its function is as follows. Catalyzes the cofactor-independent reversible oxidation of gamma-hydroxybutyrate (GHB) to succinic semialdehyde (SSA) coupled to reduction of 2-ketoglutarate (2-KG) to D-2-hydroxyglutarate (D-2-HG). L-3-hydroxybutyrate (L-3-OHB) is also a substrate for HOT when using 2-KG as hydrogen acceptor, resulting in the formation of D-2-HG. This is Hydroxyacid-oxoacid transhydrogenase, mitochondrial (ADHFE1) from Pongo abelii (Sumatran orangutan).